We begin with the raw amino-acid sequence, 268 residues long: Zinc import ATP-binding protein ZnuC (268 aa).

An ABC transporter domain is found at 16–231 (IQLKNINVVF…PTFMRLWGNQ (216 aa)). 48–55 (GPNGGGKS) lines the ATP pocket.

It belongs to the ABC transporter superfamily. Zinc importer (TC 3.A.1.15.5) family. The complex is composed of two ATP-binding proteins (ZnuC), two transmembrane proteins (ZnuB) and a solute-binding protein (ZnuA).

It is found in the cell inner membrane. The enzyme catalyses Zn(2+)(out) + ATP(in) + H2O(in) = Zn(2+)(in) + ADP(in) + phosphate(in) + H(+)(in). Part of the ABC transporter complex ZnuABC involved in zinc import. Responsible for energy coupling to the transport system. The chain is Zinc import ATP-binding protein ZnuC from Haemophilus influenzae (strain ATCC 51907 / DSM 11121 / KW20 / Rd).